We begin with the raw amino-acid sequence, 229 residues long: MAGHDSGNAKRGRSPSFGVFVRKPVERAPAKGASDGAVDSQAIRIDAAQSWPDDAVEVGAVVDAYGLKGWVKLAAHAGAGRGGDALLKARDWWLQKGAERKFARVTQAKLHGDTVVAHPDGSVDRDTALALRGARVFVRRGDFPALAADEFYWVDLIGLDVVNEAGVALGKIADMIDNGVHSIMRVEYPATGKDGRPKTGERLIPFVGVYVKAVEQAAGRVVVDWEADY.

The segment at 1–21 (MAGHDSGNAKRGRSPSFGVFV) is disordered. Residues 148–229 (ADEFYWVDLI…RVVVDWEADY (82 aa)) form the PRC barrel domain.

This sequence belongs to the RimM family. In terms of assembly, binds ribosomal protein uS19.

The protein resides in the cytoplasm. Functionally, an accessory protein needed during the final step in the assembly of 30S ribosomal subunit, possibly for assembly of the head region. Essential for efficient processing of 16S rRNA. May be needed both before and after RbfA during the maturation of 16S rRNA. It has affinity for free ribosomal 30S subunits but not for 70S ribosomes. The protein is Ribosome maturation factor RimM of Burkholderia mallei (strain NCTC 10247).